We begin with the raw amino-acid sequence, 95 residues long: Aspartyl/glutamyl-tRNA(Asn/Gln) amidotransferase subunit C (95 aa).

The protein belongs to the GatC family. As to quaternary structure, heterotrimer of A, B and C subunits.

It catalyses the reaction L-glutamyl-tRNA(Gln) + L-glutamine + ATP + H2O = L-glutaminyl-tRNA(Gln) + L-glutamate + ADP + phosphate + H(+). The catalysed reaction is L-aspartyl-tRNA(Asn) + L-glutamine + ATP + H2O = L-asparaginyl-tRNA(Asn) + L-glutamate + ADP + phosphate + 2 H(+). Functionally, allows the formation of correctly charged Asn-tRNA(Asn) or Gln-tRNA(Gln) through the transamidation of misacylated Asp-tRNA(Asn) or Glu-tRNA(Gln) in organisms which lack either or both of asparaginyl-tRNA or glutaminyl-tRNA synthetases. The reaction takes place in the presence of glutamine and ATP through an activated phospho-Asp-tRNA(Asn) or phospho-Glu-tRNA(Gln). This chain is Aspartyl/glutamyl-tRNA(Asn/Gln) amidotransferase subunit C, found in Roseobacter denitrificans (strain ATCC 33942 / OCh 114) (Erythrobacter sp. (strain OCh 114)).